A 207-amino-acid chain; its full sequence is dTTP/UTP pyrophosphatase (207 aa).

Aspartate 87 (proton acceptor) is an active-site residue.

This sequence belongs to the Maf family. YhdE subfamily. A divalent metal cation is required as a cofactor.

It localises to the cytoplasm. It carries out the reaction dTTP + H2O = dTMP + diphosphate + H(+). The catalysed reaction is UTP + H2O = UMP + diphosphate + H(+). Its function is as follows. Nucleoside triphosphate pyrophosphatase that hydrolyzes dTTP and UTP. May have a dual role in cell division arrest and in preventing the incorporation of modified nucleotides into cellular nucleic acids. The chain is dTTP/UTP pyrophosphatase from Ralstonia nicotianae (strain ATCC BAA-1114 / GMI1000) (Ralstonia solanacearum).